Here is a 363-residue protein sequence, read N- to C-terminus: Fructose-bisphosphate aldolase A (363 aa).

Arg-43 serves as a coordination point for beta-D-fructose 1,6-bisphosphate. The active-site Proton acceptor is the Glu-188. The active-site Schiff-base intermediate with dihydroxyacetone-P is the Lys-230. Beta-D-fructose 1,6-bisphosphate contacts are provided by residues 272 to 274 (SGG), Ser-301, and Arg-304.

Belongs to the class I fructose-bisphosphate aldolase family. Tetramer.

The catalysed reaction is beta-D-fructose 1,6-bisphosphate = D-glyceraldehyde 3-phosphate + dihydroxyacetone phosphate. It participates in carbohydrate degradation; glycolysis; D-glyceraldehyde 3-phosphate and glycerone phosphate from D-glucose: step 4/4. Its function is as follows. Plays a key role in glycolysis and gluconeogenesis. The sequence is that of Fructose-bisphosphate aldolase A from Salmo salar (Atlantic salmon).